Consider the following 198-residue polypeptide: MPGLFLTLEGLDGSGKTTQARRLAAFLEAQGRPVLLTREPGGGLPEVRSLLLTQELSPEAEYLLFSADRAEHVRKVILPGLAAGKVVISDRYLDSSLAYQGYGRGLPLPWLREVAREATRGLKPRLTFLLDLPPEAALRRVRRPDRLEGLGLEFFRRVREGYLALARAEPGRFVVLDATLPEEEIARAIQAHLRPLLP.

Residue 10 to 17 (GLDGSGKT) participates in ATP binding.

This sequence belongs to the thymidylate kinase family.

The catalysed reaction is dTMP + ATP = dTDP + ADP. Functionally, phosphorylation of dTMP to form dTDP in both de novo and salvage pathways of dTTP synthesis. This is Thymidylate kinase from Thermus thermophilus (strain ATCC BAA-163 / DSM 7039 / HB27).